The sequence spans 604 residues: Membrane protein insertase YidC (604 aa).

A helical transmembrane segment spans residues 8–28 (LYLAIGLSLLVLIGWNYFFAG). The interval 42–84 (EQQAQTQTTSDTTARSDLNVPGQRSLPGESPQTQLSRPEALAA) is disordered. The span at 43 to 58 (QQAQTQTTSDTTARSD) shows a compositional bias: low complexity. 5 helical membrane-spanning segments follow: residues 349 to 369 (FDLL…FWIL), 375 to 395 (VVGN…AVFF), 449 to 469 (LPML…FVTI), 507 to 527 (MIGH…SMFF), and 546 to 566 (WMPV…VIYW).

This sequence belongs to the OXA1/ALB3/YidC family. Type 1 subfamily. In terms of assembly, interacts with the Sec translocase complex via SecD. Specifically interacts with transmembrane segments of nascent integral membrane proteins during membrane integration.

The protein localises to the cell inner membrane. Required for the insertion and/or proper folding and/or complex formation of integral membrane proteins into the membrane. Involved in integration of membrane proteins that insert both dependently and independently of the Sec translocase complex, as well as at least some lipoproteins. Aids folding of multispanning membrane proteins. The sequence is that of Membrane protein insertase YidC from Beijerinckia indica subsp. indica (strain ATCC 9039 / DSM 1715 / NCIMB 8712).